Here is a 268-residue protein sequence, read N- to C-terminus: MALPEFSMRQLLEAGAHFGHQTHRWNPKMDRYIFGSRSNIHIIDLSQSIPLLHQALVKVREVAAAGGRVLFVGTKRQASDPVATAAKRCAQYYVNHRWLGGTLTNWRTVSGSIARLRELEGVLAGEGQGRSKKELLQLTRERDKLELSLGGIKDMGGIPDIMFVIDTNKEAIAILEARKLNIPVVAILDTNCDPDGITYPIPGNDDAARALQLYCDLIADAVLDGLAAGQAAAGVDLGASVAPVEPALARELAPEAPAAEAAPESAEG.

This sequence belongs to the universal ribosomal protein uS2 family.

This chain is Small ribosomal subunit protein uS2, found in Caulobacter vibrioides (strain ATCC 19089 / CIP 103742 / CB 15) (Caulobacter crescentus).